A 146-amino-acid polypeptide reads, in one-letter code: VHWSAEEKQLITSIWGKVNVADCGAEALARLLIVYPWTQRFFSSFGNLSSATAISGNPNVKAHGKKVLTSFGDAVKNLDNIKGTFAQLSELHCDKLHVDPENFRLLGDILVIILAAHFGKDFTPECQAAWQKLVRVVAHALARKYH.

Residues 2 to 146 enclose the Globin domain; the sequence is HWSAEEKQLI…VAHALARKYH (145 aa). Heme b is bound by residues His63 and His92.

It belongs to the globin family. Heterotetramer of two alpha chains and two beta chains. As to expression, red blood cells.

In terms of biological role, involved in oxygen transport from the lung to the various peripheral tissues. The sequence is that of Hemoglobin subunit beta (HBB) from Columba livia (Rock dove).